The following is a 174-amino-acid chain: 3-hydroxydecanoyl-[acyl-carrier-protein] dehydratase (174 aa).

The active site involves His-73.

Belongs to the thioester dehydratase family. FabA subfamily. As to quaternary structure, homodimer.

It localises to the cytoplasm. The catalysed reaction is a (3R)-hydroxyacyl-[ACP] = a (2E)-enoyl-[ACP] + H2O. It catalyses the reaction (3R)-hydroxydecanoyl-[ACP] = (2E)-decenoyl-[ACP] + H2O. The enzyme catalyses (2E)-decenoyl-[ACP] = (3Z)-decenoyl-[ACP]. Its pathway is lipid metabolism; fatty acid biosynthesis. Its function is as follows. Necessary for the introduction of cis unsaturation into fatty acids. Catalyzes the dehydration of (3R)-3-hydroxydecanoyl-ACP to E-(2)-decenoyl-ACP and then its isomerization to Z-(3)-decenoyl-ACP. Can catalyze the dehydratase reaction for beta-hydroxyacyl-ACPs with saturated chain lengths up to 16:0, being most active on intermediate chain length. The protein is 3-hydroxydecanoyl-[acyl-carrier-protein] dehydratase of Teredinibacter turnerae (strain ATCC 39867 / T7901).